We begin with the raw amino-acid sequence, 310 residues long: Transcription initiation factor IIB (310 aa).

A TFIIB-type zinc finger spans residues Glu-9–Asp-41. Residues Cys-14, Cys-17, Cys-33, and Cys-36 each contribute to the Zn(2+) site. Tandem repeats lie at residues Ser-127–Leu-210 and Asp-221–Glu-302.

It belongs to the TFIIB family.

Stabilizes TBP binding to an archaeal box-A promoter. Also responsible for recruiting RNA polymerase II to the pre-initiation complex (DNA-TBP-TFIIB). This Methanothermobacter thermautotrophicus (strain ATCC 29096 / DSM 1053 / JCM 10044 / NBRC 100330 / Delta H) (Methanobacterium thermoautotrophicum) protein is Transcription initiation factor IIB.